Consider the following 316-residue polypeptide: Large ribosomal subunit protein uL4 (316 aa).

The segment at M1 to D211 is large ribosomal subunit protein uL4. 2 disordered regions span residues A44–G76 and E231–D316. A compositionally biased stretch (basic residues) spans G60 to G71. The interval A212–D316 is unknown. The span at Q255 to Q270 shows a compositional bias: low complexity. 2 stretches are compositionally biased toward acidic residues: residues E281 to E291 and T301 to D316.

The protein belongs to the universal ribosomal protein uL4 family. Part of the 50S ribosomal subunit.

Its function is as follows. One of the primary rRNA binding proteins, this protein initially binds near the 5'-end of the 23S rRNA. It is important during the early stages of 50S assembly. It makes multiple contacts with different domains of the 23S rRNA in the assembled 50S subunit and ribosome. In terms of biological role, forms part of the polypeptide exit tunnel. This chain is Large ribosomal subunit protein uL4, found in Synechococcus sp. (strain JA-2-3B'a(2-13)) (Cyanobacteria bacterium Yellowstone B-Prime).